Here is a 439-residue protein sequence, read N- to C-terminus: Probable E3 ubiquitin-protein ligase makorin-1 (439 aa).

C3H1-type zinc fingers lie at residues 18-45, 48-74, and 163-190; these read WTKHVTCRYFMHGLCKEGENCRYSHDLS, KQTMICKFFQKGCCAFGDRCRYEHTKP, and EMKKQLCPYAAVGECRYGLNCAYLHGDV. The disordered stretch occupies residues 73–118; it reads KPSKQDEVPSSKPSMPLTAAPLAGTPEPVSDGPGGTTGAQEKPQGS. The tract at residues 191–218 is makorin-type Cys-His; that stretch reads CDMCGLQVLHPSDTSQRSQHIRACIEAH. Residues 236 to 290 form an RING-type zinc finger; it reads CGVCMEVVFEKTNPSERRFGILSNCCHCYCLKCIRKWRSAKQFESKIIKSCPECR. The C3H1-type 4 zinc finger occupies 319-348; sequence GMGTKPCRYFDEGRGTCPFGANCFYKHAFP. A disordered region spans residues 352 to 371; that stretch reads LEEPQPQRRQNGSNGRNRNT. The span at 358 to 368 shows a compositional bias: low complexity; that stretch reads QRRQNGSNGRN.

The enzyme catalyses S-ubiquitinyl-[E2 ubiquitin-conjugating enzyme]-L-cysteine + [acceptor protein]-L-lysine = [E2 ubiquitin-conjugating enzyme]-L-cysteine + N(6)-ubiquitinyl-[acceptor protein]-L-lysine.. Its pathway is protein modification; protein ubiquitination. Its function is as follows. E3 ubiquitin ligase catalyzing the covalent attachment of ubiquitin moieties onto substrate proteins. The chain is Probable E3 ubiquitin-protein ligase makorin-1 from Danio rerio (Zebrafish).